The following is a 627-amino-acid chain: Carnitine O-acetyltransferase, mitochondrial (627 aa).

Catalysis depends on H336, which acts as the Proton acceptor. CoA is bound by residues K418 and 422–429 (KKFKVSPD). The (R)-carnitine site is built by Y451, S453, and T464. Q553 lines the CoA pocket. Positions 625 to 627 (PKL) match the Microbody targeting signal motif.

Belongs to the carnitine/choline acetyltransferase family.

The protein resides in the peroxisome. It localises to the mitochondrion inner membrane. The enzyme catalyses (R)-carnitine + acetyl-CoA = O-acetyl-(R)-carnitine + CoA. In terms of biological role, carnitine acetylase is specific for short chain fatty acids. Carnitine acetylase seems to affect the flux through the pyruvate dehydrogenase complex. It may be involved as well in the transport of acetyl-CoA into mitochondria. In Candida tropicalis (Yeast), this protein is Carnitine O-acetyltransferase, mitochondrial (CAT2).